The sequence spans 474 residues: MTVKTRFAPSPTGFLHVGGARTALYSWLFAKHMGGEFVLRIEDTDLERSTQEAIDAILEGMEWLGMDWDEGPYYQTKRFDRYNQLVDQLLAEDKAYKCYCPKALLDELREEQMAAGVKPRYDANHPKIVAANAAATEDSAFCIRFRNPKEGTVVFEDKVRGRIEIANSELDDLIIRRTDGSPTYNFCVVIDDWDMGITQVVRGEDHINNTPRQINIYKAIGAPVPEFAHCAMILGDDGAKLSKRHGAVSVMQYRDEGYLPQALLNYLIRLGWSHGDQEIFSMEEMINLFSLESISKSASAFNTDKLLWLNNHYIKTAEPEYVAKYLQWHLEQKEIDTANGPKITDVIGLVGERCNTLIELADQSRYFYQDFSEFEAGAAKKHLRPVAKDALALVLSKVEALEEWNTENLHVVIADTCTELEVGMGKVGMPLRVAVTGQGQSPSVDATMMLIGKERVVNRITMALAFIAEREANA.

The 'HIGH' region signature appears at 9–19; the sequence is PSPTGFLHVGG. Residues 240–244 carry the 'KMSKS' region motif; sequence KLSKR. Residue lysine 243 participates in ATP binding.

Belongs to the class-I aminoacyl-tRNA synthetase family. Glutamate--tRNA ligase type 1 subfamily. As to quaternary structure, monomer.

It is found in the cytoplasm. It carries out the reaction tRNA(Glu) + L-glutamate + ATP = L-glutamyl-tRNA(Glu) + AMP + diphosphate. Functionally, catalyzes the attachment of glutamate to tRNA(Glu) in a two-step reaction: glutamate is first activated by ATP to form Glu-AMP and then transferred to the acceptor end of tRNA(Glu). The protein is Glutamate--tRNA ligase of Photobacterium profundum (strain SS9).